The chain runs to 358 residues: Type II restriction enzyme HpaII (358 aa).

Homodimer.

The catalysed reaction is Endonucleolytic cleavage of DNA to give specific double-stranded fragments with terminal 5'-phosphates.. In terms of biological role, an E and P subtype restriction enzyme that recognizes the double-stranded sequence 5'-CCGG-3' and cleaves after C-1. The protein is Type II restriction enzyme HpaII of Haemophilus parainfluenzae.